The sequence spans 230 residues: Orotidine 5'-phosphate decarboxylase (230 aa).

Residues D11, K34, 61–70, T117, R179, Q188, G208, and R209 contribute to the substrate site; that span reads DLKLHDIPNT. Catalysis depends on K63, which acts as the Proton donor.

The protein belongs to the OMP decarboxylase family. Type 1 subfamily. As to quaternary structure, homodimer.

The catalysed reaction is orotidine 5'-phosphate + H(+) = UMP + CO2. It functions in the pathway pyrimidine metabolism; UMP biosynthesis via de novo pathway; UMP from orotate: step 2/2. Its function is as follows. Catalyzes the decarboxylation of orotidine 5'-monophosphate (OMP) to uridine 5'-monophosphate (UMP). The sequence is that of Orotidine 5'-phosphate decarboxylase from Streptococcus equi subsp. zooepidemicus (strain H70).